A 307-amino-acid polypeptide reads, in one-letter code: Oxygen-dependent coproporphyrinogen-III oxidase (307 aa).

Ser-99 lines the substrate pocket. His-103 and His-113 together coordinate a divalent metal cation. The active-site Proton donor is His-113. Residue 115-117 (NVR) participates in substrate binding. The a divalent metal cation site is built by His-152 and His-182. The tract at residues 247-282 (YVEFNLVFDRGTLFGLQSGGRTESILLSMPPTAGWR) is important for dimerization. Residue 265–267 (GGR) coordinates substrate.

The protein belongs to the aerobic coproporphyrinogen-III oxidase family. As to quaternary structure, homodimer. A divalent metal cation is required as a cofactor.

The protein resides in the cytoplasm. It catalyses the reaction coproporphyrinogen III + O2 + 2 H(+) = protoporphyrinogen IX + 2 CO2 + 2 H2O. Its pathway is porphyrin-containing compound metabolism; protoporphyrin-IX biosynthesis; protoporphyrinogen-IX from coproporphyrinogen-III (O2 route): step 1/1. Involved in the heme biosynthesis. Catalyzes the aerobic oxidative decarboxylation of propionate groups of rings A and B of coproporphyrinogen-III to yield the vinyl groups in protoporphyrinogen-IX. This is Oxygen-dependent coproporphyrinogen-III oxidase from Burkholderia pseudomallei (strain 1106a).